Reading from the N-terminus, the 451-residue chain is MSRIERIFAREILDSRGTPTVEVEVWTEFGGYGCAKAPSGASTGVNEALELRDGDKARYNGKGVLKAVKNVNEIIAPELIGIDALDQLTVDRKMLDLDGTEFKTKLGANGILAVSLAVAKAAASELDIPLYKYLGGVQAKKLPVPMLNVINGGEHADSAIDFQEFMIMPVGAKSFSEALRWSSETFQALKSLLKSKKDITAVGDEGGFAPNFEWAYEKHDLESFKKKTPAEIALDLLVDAIKKAGYKPGKDGIMIAMDCASSELYLEDKKYHFKKIEKVTNQEWSLTSDEMISYLEKLVNNYPIISIEDGLAETDWEGFTKLTQKIGDKVQIVGDDLFTTNPKFIKQGINKKAANSTLIKLNQIGTLSETVEAITMTQKAGWTAVVSHRSGETEDTTIADLAVAFNTGQIKTGSMSRSDRIAKYNRLLQIESELGQNAIYDGLEAFYNLNK.

Gln163 contributes to the (2R)-2-phosphoglycerate binding site. The active-site Proton donor is the Glu205. Mg(2+) contacts are provided by Asp258, Glu308, and Asp335. Residues Lys360, Arg389, Ser390, and Lys411 each contribute to the (2R)-2-phosphoglycerate site. Lys360 functions as the Proton acceptor in the catalytic mechanism.

The protein belongs to the enolase family. The cofactor is Mg(2+).

It is found in the cytoplasm. Its subcellular location is the secreted. It localises to the cell surface. It catalyses the reaction (2R)-2-phosphoglycerate = phosphoenolpyruvate + H2O. The protein operates within carbohydrate degradation; glycolysis; pyruvate from D-glyceraldehyde 3-phosphate: step 4/5. Catalyzes the reversible conversion of 2-phosphoglycerate (2-PG) into phosphoenolpyruvate (PEP). It is essential for the degradation of carbohydrates via glycolysis. This chain is Enolase, found in Mycoplasma capricolum subsp. capricolum (strain California kid / ATCC 27343 / NCTC 10154).